Reading from the N-terminus, the 282-residue chain is Transcription factor BC1 (282 aa).

The segment at Thr-34–Arg-123 is disordered. Residues Met-45 to Ser-55 are compositionally biased toward polar residues. Basic and acidic residues predominate over residues His-75–Arg-84. The Nuclear localization signal motif lies at Ala-109 to Asp-116. The segment at Gln-113 to Arg-126 is basic motif; degenerate. Residues Gln-113 to Leu-163 form the bHLH domain. Positions Glu-127–Leu-163 are helix-loop-helix motif. Positions Pro-219–Gln-251 are disordered.

It belongs to the bHLH protein family. As to quaternary structure, homodimer. Component of a nuclear cell elongation controlling complex made of ILI5/BUL1, LO9-177 and BC1. Interacts with ILI5/BUL1 only in the presence of LO9-177. Interacts with IBH1. Binds to LO9-177 in the nucleus. Interacts with BCL1. As to expression, preferentially present in anthers and leaves lamina joints. Expressed in seedlings, leaves sheaths, collars and panicles.

Its subcellular location is the nucleus. Functionally, transcription activator that contributes, together with LO9-177 and ILI5/BUL1, to the promotion of leaf inclination and grain size by modulating cell elongation. Involved in the RLI1-dependent modulation of leaf inclination by promoting lamina joint cell elongation, especially in response to phosphate (Pi) availability. The sequence is that of Transcription factor BC1 from Oryza sativa subsp. japonica (Rice).